Here is a 131-residue protein sequence, read N- to C-terminus: UPF0102 protein YraN (131 aa).

Over residues 1-19 the composition is skewed to polar residues; it reads MATVPTRSGSPRQLTTKQT. The tract at residues 1-20 is disordered; the sequence is MATVPTRSGSPRQLTTKQTG.

This sequence belongs to the UPF0102 family.

The protein is UPF0102 protein YraN of Escherichia coli O17:K52:H18 (strain UMN026 / ExPEC).